A 135-amino-acid polypeptide reads, in one-letter code: ATP synthase epsilon chain (135 aa).

Belongs to the ATPase epsilon chain family. As to quaternary structure, F-type ATPases have 2 components, CF(1) - the catalytic core - and CF(0) - the membrane proton channel. CF(1) has five subunits: alpha(3), beta(3), gamma(1), delta(1), epsilon(1). CF(0) has three main subunits: a, b and c.

Its subcellular location is the cell inner membrane. In terms of biological role, produces ATP from ADP in the presence of a proton gradient across the membrane. The sequence is that of ATP synthase epsilon chain from Rhizobium leguminosarum bv. trifolii (strain WSM2304).